Consider the following 257-residue polypeptide: MSPPLELDYIGLSPPVPAAADAAADNDLKGTELRLGLPGSHSPDRSPPAATLDLLPAAKGAKRGFSDEARPLPASAAAAAAAGKGKKAAAGEEDEDAEEEDKKVAAAPQAPAAKAQVVGWPPIRSYRKNTMATNQLKSSKEDAEAKQGQGFLYVKVSMDGAPYLRKVDLKTYKNYKDLSTALEKMFIGFTTGKDGLSESRKDGEYVLTYEDKDGDWMLVGDVPWEMFANSCRRLRIMKGSDAIGLAPRAVDKSKNRN.

Disordered regions lie at residues 1–51 (MSPP…PAAT) and 85–119 (GKKAAAGEEDEDAEEEDKKVAAAPQAPAAKAQVVG). The short motif at 33–37 (LRLGL) is the EAR-like (transcriptional repression) element. A compositionally biased stretch (low complexity) spans 105 to 118 (AAAPQAPAAKAQVV). Residues 151-239 (FLYVKVSMDG…SCRRLRIMKG (89 aa)) enclose the PB1 domain.

It belongs to the Aux/IAA family. As to quaternary structure, homodimers and heterodimers. As to expression, highly expressed in etiolated seedlings and flowers. Expressed in roots and green seedlings.

It is found in the nucleus. In terms of biological role, aux/IAA proteins are short-lived transcriptional factors that function as repressors of early auxin response genes at low auxin concentrations. This Oryza sativa subsp. japonica (Rice) protein is Auxin-responsive protein IAA17 (IAA17).